Reading from the N-terminus, the 118-residue chain is Cobalt transport protein CbiN (118 aa).

2 consecutive transmembrane segments (helical) span residues 7-27 (INALLLLAVAALAVLPLVLGL) and 70-90 (SALFALQAALGAGVLAYYFGL). A disordered region spans residues 99-118 (ERASAASGAAAAPGDAPEGD). The segment covering 102-118 (SAASGAAAAPGDAPEGD) has biased composition (low complexity).

The protein belongs to the CbiN family. In terms of assembly, forms an energy-coupling factor (ECF) transporter complex composed of an ATP-binding protein (A component, CbiO), a transmembrane protein (T component, CbiQ) and 2 possible substrate-capture proteins (S components, CbiM and CbiN) of unknown stoichimetry.

The protein localises to the cell membrane. It participates in cofactor biosynthesis; adenosylcobalamin biosynthesis. Functionally, part of the energy-coupling factor (ECF) transporter complex CbiMNOQ involved in cobalt import. The chain is Cobalt transport protein CbiN from Streptomyces coelicolor (strain ATCC BAA-471 / A3(2) / M145).